The chain runs to 607 residues: Phosphoenolpyruvate carboxykinase [GTP] (607 aa).

Substrate-binding positions include Arg-81 and 221–223 (YGG). Mn(2+)-binding residues include Lys-230 and His-250. Substrate is bound at residue Ser-272. Residue 273-278 (ACGKTN) participates in GTP binding. Residue Cys-274 is part of the active site. Asp-297 lines the Mn(2+) pocket. 388-390 (NSR) contacts substrate. Residues Arg-390, Arg-421, and 516–519 (FGDN) contribute to the GTP site.

The protein belongs to the phosphoenolpyruvate carboxykinase [GTP] family. Monomer. The cofactor is Mn(2+).

The protein resides in the cytoplasm. It catalyses the reaction oxaloacetate + GTP = phosphoenolpyruvate + GDP + CO2. It functions in the pathway carbohydrate biosynthesis; gluconeogenesis. Its function is as follows. Catalyzes the conversion of oxaloacetate (OAA) to phosphoenolpyruvate (PEP), the rate-limiting step in the metabolic pathway that produces glucose from lactate and other precursors derived from the citric acid cycle. This chain is Phosphoenolpyruvate carboxykinase [GTP], found in Renibacterium salmoninarum (strain ATCC 33209 / DSM 20767 / JCM 11484 / NBRC 15589 / NCIMB 2235).